The sequence spans 370 residues: 1-propanol dehydrogenase PduQ (370 aa).

This sequence belongs to the iron-containing alcohol dehydrogenase family. Interacts with PduP, probably via the N-terminus of PduQ. It depends on Fe cation as a cofactor.

It localises to the bacterial microcompartment. The enzyme catalyses 1-propanol + NAD(+) = propanal + NADH + H(+). Its pathway is polyol metabolism; 1,2-propanediol degradation. Its activity is regulated as follows. Enzyme is oxygen sensitive. In terms of biological role, an iron-dependent alcohol dehydrogenase required for optimal 1,2-propanediol (1,2-PD) degradation. NAD(+) and NADH are regenerated internally within the bacterial microcompartment (BMC) dedicated to 1,2-PD degradation by the PduP and PduQ enzymes, which reduce NAD(+) and oxidize NADH respectively, although there must also be cofactor transport across the BMC. The 1,2-PD-specific bacterial microcompartment (BMC) concentrates low levels of 1,2-PD catabolic enzymes, concentrates volatile reaction intermediates thus enhancing pathway flux and keeps the level of toxic, mutagenic propionaldehyde low. The polypeptide is 1-propanol dehydrogenase PduQ (Salmonella typhimurium (strain LT2 / SGSC1412 / ATCC 700720)).